The chain runs to 372 residues: 2,7-anhydro-N-acetylneuraminate hydratase (372 aa).

NAD(+) contacts are provided by tyrosine 11, phenylalanine 12, aspartate 33, asparagine 36, threonine 68, asparagine 70, histidine 73, glutamate 90, lysine 91, and tryptophan 160.

This sequence belongs to the Gfo/Idh/MocA family. In terms of assembly, homodimer. Requires NAD(+) as cofactor.

The enzyme catalyses N-acetyl-2,7-anhydro-alpha-neuraminate + H2O = N-acetyl-alpha-neuraminate. It carries out the reaction 2-deoxy-2,3-dehydro-N-acetylneuraminate + H2O = N-acetyl-alpha-neuraminate. All conversions require NAD(+) as a cofactor, which is regenerated in the reaction. The presence of EGTA and several divalent cations does not affect the activity. Functionally, hydratase involved in the degradation of sialic acids. Catalyzes the reversible conversion of the dehydrated form of N-acetylneuraminate (Neu5Ac), 2,7-anhydro-N-acetylneuraminate (2,7-AN), to Neu5Ac. Also catalyzes the irreversible conversion of 2-deoxy-2,3-didehydro-N-acetylneuraminate (2,3-EN) to Neu5Ac. The reaction mechanism involves keto intermediates and the transient formation of NADH. The polypeptide is 2,7-anhydro-N-acetylneuraminate hydratase (Escherichia coli (strain K12)).